Here is a 345-residue protein sequence, read N- to C-terminus: 3-isopropylmalate dehydrogenase (345 aa).

74–87 (GPKWDGLPRKIRPE) provides a ligand contact to NAD(+). 4 residues coordinate substrate: Arg94, Arg104, Arg132, and Asp217. Residues Asp217, Asp241, and Asp245 each contribute to the Mg(2+) site. 274–286 (GSAPDIAGKGIAN) is a binding site for NAD(+).

It belongs to the isocitrate and isopropylmalate dehydrogenases family. LeuB type 1 subfamily. In terms of assembly, homodimer. It depends on Mg(2+) as a cofactor. Mn(2+) serves as cofactor.

The protein resides in the cytoplasm. The enzyme catalyses (2R,3S)-3-isopropylmalate + NAD(+) = 4-methyl-2-oxopentanoate + CO2 + NADH. It functions in the pathway amino-acid biosynthesis; L-leucine biosynthesis; L-leucine from 3-methyl-2-oxobutanoate: step 3/4. Functionally, catalyzes the oxidation of 3-carboxy-2-hydroxy-4-methylpentanoate (3-isopropylmalate) to 3-carboxy-4-methyl-2-oxopentanoate. The product decarboxylates to 4-methyl-2 oxopentanoate. The protein is 3-isopropylmalate dehydrogenase (leuB) of Thermus thermophilus (strain ATCC 27634 / DSM 579 / HB8).